The chain runs to 172 residues: WW domain binding protein VOPP1 (172 aa).

The first 22 residues, 1-22 (MGRRLGRVAALLLGLLVECTEA), serve as a signal peptide directing secretion. Residues 23-60 (KKHCWYFEGLYPTYYICRSYEDCCGSRCCVRALSIQRL) lie on the Extracellular side of the membrane. A helical membrane pass occupies residues 61–81 (WYFWFLLMMGVLFCCGAGFFI). Residues 82–172 (RRRMYPPPLI…PPYEQVVKDK (91 aa)) are Cytoplasmic-facing. The disordered stretch occupies residues 139–172 (QVQPNSPHGGTTYPPPPSYCNTPPPPYEQVVKDK). Positions 151-165 (YPPPPSYCNTPPPPY) are enriched in pro residues.

It belongs to the VOPP1/ECOP family. In terms of assembly, interacts with WWOX (via WW domain).

It is found in the cytoplasmic vesicle membrane. The protein localises to the late endosome membrane. The protein resides in the lysosome membrane. Increases the transcriptional activity of NFKB1 by facilitating its nuclear translocation, DNA-binding and associated apoptotic response, when overexpressed. May sequester WWOX in lysosomal vesicles and thereby regulate WWOX role as tumor suppressor. This chain is WW domain binding protein VOPP1 (Vopp1), found in Mus musculus (Mouse).